The following is a 189-amino-acid chain: Elongation factor P (189 aa).

Belongs to the elongation factor P family.

The protein localises to the cytoplasm. It participates in protein biosynthesis; polypeptide chain elongation. Functionally, involved in peptide bond synthesis. Stimulates efficient translation and peptide-bond synthesis on native or reconstituted 70S ribosomes in vitro. Probably functions indirectly by altering the affinity of the ribosome for aminoacyl-tRNA, thus increasing their reactivity as acceptors for peptidyl transferase. This chain is Elongation factor P, found in Ehrlichia chaffeensis (strain ATCC CRL-10679 / Arkansas).